A 158-amino-acid chain; its full sequence is 2-C-methyl-D-erythritol 2,4-cyclodiphosphate synthase (158 aa).

A divalent metal cation is bound by residues aspartate 9 and histidine 11. 4-CDP-2-C-methyl-D-erythritol 2-phosphate-binding positions include 9-11 (DVH) and 35-36 (HS). Histidine 43 is an a divalent metal cation binding site. Residues 57 to 59 (DIG), 62 to 66 (FPDTD), 101 to 107 (AQAPKMA), 133 to 136 (TTTE), phenylalanine 140, and arginine 143 contribute to the 4-CDP-2-C-methyl-D-erythritol 2-phosphate site.

This sequence belongs to the IspF family. As to quaternary structure, homotrimer. It depends on a divalent metal cation as a cofactor.

The enzyme catalyses 4-CDP-2-C-methyl-D-erythritol 2-phosphate = 2-C-methyl-D-erythritol 2,4-cyclic diphosphate + CMP. It functions in the pathway isoprenoid biosynthesis; isopentenyl diphosphate biosynthesis via DXP pathway; isopentenyl diphosphate from 1-deoxy-D-xylulose 5-phosphate: step 4/6. Involved in the biosynthesis of isopentenyl diphosphate (IPP) and dimethylallyl diphosphate (DMAPP), two major building blocks of isoprenoid compounds. Catalyzes the conversion of 4-diphosphocytidyl-2-C-methyl-D-erythritol 2-phosphate (CDP-ME2P) to 2-C-methyl-D-erythritol 2,4-cyclodiphosphate (ME-CPP) with a corresponding release of cytidine 5-monophosphate (CMP). The chain is 2-C-methyl-D-erythritol 2,4-cyclodiphosphate synthase from Vibrio vulnificus (strain YJ016).